Here is a 261-residue protein sequence, read N- to C-terminus: MICOS complex subunit Mic25 (261 aa).

Gly-2 carries the N-myristoyl glycine lipid modification. Ser-13, Ser-31, and Ser-33 each carry phosphoserine. Disordered stretches follow at residues 39–59, 81–114, and 140–165; these read KDCS…PECS, CGPA…VKED, and TEKH…RLTR. Positions 109–202 form a coiled coil; the sequence is SAVKEDLKKF…AELYKLSSQQ (94 aa). Residues 154–165 are compositionally biased toward basic and acidic residues; the sequence is THEQQQSDRLTR. The CHCH domain maps to 220–261; that stretch reads EPVCSGLQAQILRCYRDHLHEVLLCSDLAKAYQHCVSTARKG. 2 consecutive short sequence motifs (cx9C motif) follow at residues 223–233 and 244–254; these read CSGLQAQILRC and CSDLAKAYQHC. Disulfide bonds link Cys-223-Cys-254 and Cys-233-Cys-244.

This sequence belongs to the MICOS complex subunit Mic19 family. Metazoan Mic25 subfamily. As to quaternary structure, component of the mitochondrial contact site and cristae organizing system (MICOS) complex, composed of at least MICOS10/MIC10, CHCHD3/MIC19, CHCHD6/MIC25, APOOL/MIC27, IMMT/MIC60, APOO/MIC23/MIC26 and MICOS13/MIC13. This complex was also known under the names MINOS or MitOS complex. The MICOS complex associates with mitochondrial outer membrane proteins SAMM50, MTX1 and MTX2 (together described as components of the mitochondrial outer membrane sorting assembly machinery (SAM) complex) and DNAJC11, mitochondrial inner membrane protein TMEM11 and with HSPA9. The MICOS and SAM complexes together with DNAJC11 are part of a large protein complex spanning both membranes termed the mitochondrial intermembrane space bridging (MIB) complex. Interacts with DISC1. Interacts with IMMT/MIC60.

The protein localises to the mitochondrion inner membrane. The protein resides in the mitochondrion. Its function is as follows. Component of the MICOS complex, a large protein complex of the mitochondrial inner membrane that plays crucial roles in the maintenance of crista junctions, inner membrane architecture, and formation of contact sites to the outer membrane. The sequence is that of MICOS complex subunit Mic25 (Chchd6) from Rattus norvegicus (Rat).